The primary structure comprises 483 residues: Transmembrane protein 39B (483 aa).

A glycan (N-linked (GlcNAc...) asparagine) is linked at asparagine 9. A run of 7 helical transmembrane segments spans residues 76 to 96 (HLLFELQLFFCHLIALFVHYI), 114 to 134 (TSLNFHLIDFNVLTLTTIVLA), 158 to 182 (LLVATRFAVLTGTGWSLCRSIILLF), 187 to 207 (FFNLLFLCYPFGMYIPFLQLG), 281 to 301 (EVLLSSMLSAYYVAFVPVWFV), 414 to 434 (VLNILTTLEGVLIFYQLYSLL), and 440 to 460 (HHTISLALILFSNYYAFFKLL).

It belongs to the TMEM39 family.

It localises to the endoplasmic reticulum membrane. In terms of biological role, may protect the cells against DNA damage caused by exposure to the cold-warming stress and facilitates tissue damage repair during the recovery phase. This Xenopus tropicalis (Western clawed frog) protein is Transmembrane protein 39B.